The following is a 1415-amino-acid chain: DNA-directed RNA polymerase subunit beta'' (1415 aa).

Residues cysteine 217, cysteine 291, cysteine 298, and cysteine 301 each contribute to the Zn(2+) site.

Belongs to the RNA polymerase beta' chain family. RpoC2 subfamily. As to quaternary structure, in plastids the minimal PEP RNA polymerase catalytic core is composed of four subunits: alpha, beta, beta', and beta''. When a (nuclear-encoded) sigma factor is associated with the core the holoenzyme is formed, which can initiate transcription. Zn(2+) serves as cofactor.

The protein resides in the plastid. The protein localises to the chloroplast. The enzyme catalyses RNA(n) + a ribonucleoside 5'-triphosphate = RNA(n+1) + diphosphate. DNA-dependent RNA polymerase catalyzes the transcription of DNA into RNA using the four ribonucleoside triphosphates as substrates. In Phaeodactylum tricornutum (strain CCAP 1055/1), this protein is DNA-directed RNA polymerase subunit beta''.